The sequence spans 658 residues: Putative arrestin-related trafficking adapter C2D10.04 (658 aa).

Disordered regions lie at residues 21–107 (LHHQ…LTWS) and 638–658 (REEA…EIPR). Positions 39–81 (NRSSNSGLNRRNSVFGLPSSGLSSRLSKPSLSSINNSNNSSSN) are enriched in low complexity. A compositionally biased stretch (polar residues) spans 96–107 (RNMSNKPPLTWS). Position 653 is a phosphoserine (serine 653).

It belongs to the ALY1 family.

The protein localises to the cytoplasm. Its function is as follows. May regulate endocytosis in response to extracellular stimuli. This Schizosaccharomyces pombe (strain 972 / ATCC 24843) (Fission yeast) protein is Putative arrestin-related trafficking adapter C2D10.04.